The following is a 219-amino-acid chain: Uracil phosphoribosyltransferase 1 (219 aa).

GTP-binding positions include R33, R42, and 76–79 (DGRI). R86 contacts 5-phospho-alpha-D-ribose 1-diphosphate. R103 serves as a coordination point for GTP. 5-phospho-alpha-D-ribose 1-diphosphate is bound at residue R111. R132 serves as a coordination point for GTP. 5-phospho-alpha-D-ribose 1-diphosphate contacts are provided by residues D138 and 138-146 (DPMLATGGS). Y202 contributes to the D-ribose 5-phosphate binding site. Uracil contacts are provided by residues I203 and 208-210 (GDF). Residue D209 participates in 5-phospho-alpha-D-ribose 1-diphosphate binding.

The protein belongs to the UPRTase family. Mg(2+) is required as a cofactor.

It catalyses the reaction UMP + diphosphate = 5-phospho-alpha-D-ribose 1-diphosphate + uracil. The protein operates within pyrimidine metabolism; UMP biosynthesis via salvage pathway; UMP from uracil: step 1/1. With respect to regulation, allosterically activated by GTP. Functionally, catalyzes the conversion of uracil and 5-phospho-alpha-D-ribose 1-diphosphate (PRPP) to UMP and diphosphate. This is Uracil phosphoribosyltransferase 1 from Schizosaccharomyces pombe (strain 972 / ATCC 24843) (Fission yeast).